The primary structure comprises 328 residues: Ribosomal RNA small subunit methyltransferase H (328 aa).

S-adenosyl-L-methionine is bound by residues 37 to 39 (GGH), Asp-57, Phe-83, Asp-104, and Gln-111.

Belongs to the methyltransferase superfamily. RsmH family.

The protein localises to the cytoplasm. The catalysed reaction is cytidine(1402) in 16S rRNA + S-adenosyl-L-methionine = N(4)-methylcytidine(1402) in 16S rRNA + S-adenosyl-L-homocysteine + H(+). Its function is as follows. Specifically methylates the N4 position of cytidine in position 1402 (C1402) of 16S rRNA. This is Ribosomal RNA small subunit methyltransferase H from Neisseria meningitidis serogroup B (strain ATCC BAA-335 / MC58).